The following is a 293-amino-acid chain: 33 kDa chaperonin (293 aa).

Cystine bridges form between cysteine 230-cysteine 232 and cysteine 263-cysteine 266.

This sequence belongs to the HSP33 family. Under oxidizing conditions two disulfide bonds are formed involving the reactive cysteines. Under reducing conditions zinc is bound to the reactive cysteines and the protein is inactive.

The protein resides in the cytoplasm. Redox regulated molecular chaperone. Protects both thermally unfolding and oxidatively damaged proteins from irreversible aggregation. Plays an important role in the bacterial defense system toward oxidative stress. In Edwardsiella ictaluri (strain 93-146), this protein is 33 kDa chaperonin.